The following is a 706-amino-acid chain: Maternal embryonic leucine zipper kinase (706 aa).

Residues 11–265 (YAVHDELGSG…VKKLLEHDWL (255 aa)) enclose the Protein kinase domain. ATP is bound by residues 17–25 (LGSGGFGKV) and Lys40. Residue Asp132 is the Proton acceptor of the active site. 3 disordered regions span residues 366–386 (LDKS…SSSD), 433–493 (FTGR…SRGP), and 506–555 (SVYT…IGSA). Polar residues-rich tracts occupy residues 447 to 461 (SVRS…SAAT) and 506 to 515 (SVYTTPNTRP). The KA1 domain maps to 656 to 705 (QETVHGWMTVELEIVRLQMFDKVGIRRKRLKGDAFMYKKVCEKILQMAKI).

The protein belongs to the protein kinase superfamily. CAMK Ser/Thr protein kinase family. SNF1 subfamily. In terms of processing, may be phosphorylated at Thr-169 by par-4 and/or autophosphorylated which likely results in its activation. Phosphorylation is not required for co-localization with the centrosome.

It is found in the cytoplasm. The protein resides in the cytoskeleton. Its subcellular location is the microtubule organizing center. It localises to the centrosome. The enzyme catalyses L-seryl-[protein] + ATP = O-phospho-L-seryl-[protein] + ADP + H(+). It carries out the reaction L-threonyl-[protein] + ATP = O-phospho-L-threonyl-[protein] + ADP + H(+). Its function is as follows. Serine/threonine-protein kinase involved in cell autonomous neuroblast asymmetric divisions that generate one precursor cell and one apoptotic cell by controlling spindle positioning, myosin distribution and the segregation of cell fate determinants. Plays a role in neural fate specification in several dopaminergic linages, acting in concert with ham-1. Involved in phosphorylation of multiple proteins associated with key developmental processes, including the cell cycle, apoptosis, endocytosis, and asymmetric cell division. Promotes cell shedding during embryogenesis, probably through the endocytosis-mediated removal of cell adhesion molecules such as hmp-1 from the cell surface. May act downstream of par-4/strd-1/mop-25 to regulate cell shedding. The protein is Maternal embryonic leucine zipper kinase of Caenorhabditis elegans.